Here is a 278-residue protein sequence, read N- to C-terminus: Insulin-like growth factor-binding protein-like 1 (278 aa).

Residues 1 to 25 (MPRLSLLLPLLLLLLLPLLPPLSPS) form the signal peptide. An IGFBP N-terminal domain is found at 34 to 109 (RRPKCGPCRP…PEGTGLCVCA (76 aa)). 7 disulfide bridges follow: C38/C63, C41/C65, C46/C66, C52/C69, C77/C91, C85/C106, and C115/C151. In terms of domain architecture, Kazal-like spans 95 to 153 (AAGAAPEGTGLCVCAQRGTVCGSDGRSYPSVCALRLRARHTPRAHPGHLHKARDGPCEF). The Ig-like C2-type domain maps to 155–259 (PVVVVPPRSV…GEAESHSTVT (105 aa)). N-linked (GlcNAc...) asparagine glycosylation is present at N166. An intrachain disulfide couples C176 to C243.

As to expression, expressed at the highest level in both brain and testis, with lower levels in the prostate, bladder and lung.

The protein resides in the secreted. Functionally, IGF-binding proteins prolong the half-life of IGFs and have been shown to either inhibit or stimulate the growth promoting effects of the IGFs in cell culture. They alter the interaction of IGFs with their cell surface receptors. May be a putative tumor suppressor protein. In Homo sapiens (Human), this protein is Insulin-like growth factor-binding protein-like 1 (IGFBPL1).